Reading from the N-terminus, the 154-residue chain is Small ribosomal subunit protein uS15 (154 aa).

Positions 1 to 11 are enriched in basic residues; sequence MSRLHAHKRYH. The tract at residues 1-24 is disordered; the sequence is MSRLHAHKRYHGQSGSKRPLRTTK.

The protein belongs to the universal ribosomal protein uS15 family. In terms of assembly, part of the 30S ribosomal subunit.

The polypeptide is Small ribosomal subunit protein uS15 (Nanoarchaeum equitans (strain Kin4-M)).